A 274-amino-acid polypeptide reads, in one-letter code: Deoxyribonuclease TATDN3 (274 aa).

6 residues coordinate Zn(2+): histidine 12, histidine 14, glutamate 107, histidine 147, histidine 170, and aspartate 218.

The protein belongs to the metallo-dependent hydrolases superfamily. TatD-type hydrolase family. Mn(2+) is required as a cofactor. It depends on Ca(2+) as a cofactor. Requires Mg(2+) as cofactor. The cofactor is Zn(2+).

The protein resides in the nucleus. Its activity is regulated as follows. The 3'-exonuclease activity is sensitive to the metal ion present in the active site, whereas the AP endodeoxyribonuclease activity is observed in a variety of divalent metal cofactors. 3'-exoxonuclease activity is suppressed in the presence of Ca(2+), Zn(2+) and Ni(2+). Exhibits 3'-exonuclease activities and apurinic/apyrimidinic (AP) endonuclease (in vitro). Show preferential AP endonuclease activity on double-stranded DNA substrates and 3'- exonuclease activity on single-stranded DNA. In Homo sapiens (Human), this protein is Deoxyribonuclease TATDN3 (TATDN3).